The sequence spans 293 residues: N(1)-aminopropylagmatine ureohydrolase (293 aa).

The Mn(2+) site is built by His-105, Asp-128, His-130, Asp-132, Asp-210, and Asp-212.

The protein belongs to the arginase family. Requires Mn(2+) as cofactor.

The catalysed reaction is N(1)-(3-aminopropyl)agmatine + H2O = urea + spermidine. It functions in the pathway amine and polyamine biosynthesis; spermidine biosynthesis. In terms of biological role, involved in the biosynthesis of polyamines which are thought to support the growth of thermophilic microorganisms under high-temperature conditions. It seems that long-chain and branched-chain of polyamines effectively stabilize DNA and RNA, respectively. Catalyzes the decarboxylation of N1-(3-aminopropyl)agmatine to yield spermidine and urea. Does not act on agmatine. The polypeptide is N(1)-aminopropylagmatine ureohydrolase (Thermus thermophilus (strain ATCC BAA-163 / DSM 7039 / HB27)).